Here is a 331-residue protein sequence, read N- to C-terminus: Adenosine deaminase (331 aa).

Zn(2+) contacts are provided by His12 and His14. The substrate site is built by His14, Asp16, and Gly170. Zn(2+) is bound at residue His197. The active-site Proton donor is Glu200. A Zn(2+)-binding site is contributed by Asp278. Asp279 contacts substrate.

Belongs to the metallo-dependent hydrolases superfamily. Adenosine and AMP deaminases family. Adenosine deaminase subfamily. Zn(2+) serves as cofactor.

The enzyme catalyses adenosine + H2O + H(+) = inosine + NH4(+). It carries out the reaction 2'-deoxyadenosine + H2O + H(+) = 2'-deoxyinosine + NH4(+). Functionally, catalyzes the hydrolytic deamination of adenosine and 2-deoxyadenosine. This chain is Adenosine deaminase, found in Shewanella baltica (strain OS223).